We begin with the raw amino-acid sequence, 234 residues long: MSSGVAARCDAKKLVRSPSGLRMVPEHRAFGSPFGLEEPQWVPDKECPRCMQCDAKFDFITRKHHCRRCGKCFCDRCCSQKVPLRRMCFVDPVRQCADCALVSHREAEFYDKQLKVLVSGATFLVTFGDSEKPETMVCRLSNNQRCLILDGDSHHEIEIAHVCTVQILTEGFTPGAGSTRATGMFLQYTVPGAEAAAQLRLMAGEDASGSKRQAAAWLAAMHKATKLLYESRDQ.

The FYVE-type zinc finger occupies 44-104 (DKECPRCMQC…QCADCALVSH (61 aa)). The Zn(2+) site is built by cysteine 50, cysteine 53, cysteine 66, cysteine 69, cysteine 74, cysteine 77, cysteine 96, and cysteine 99. The interval 107-234 (AEFYDKQLKV…TKLLYESRDQ (128 aa)) is PH-like.

Interacts with PTK2/FAK1.

The protein resides in the cell junction. It is found in the focal adhesion. It localises to the cytoplasmic vesicle. Its subcellular location is the endosome. Its function is as follows. Plays a role in cell adhesion, and thereby in cell motility which requires repeated formation and disassembly of focal adhesions. Regulates microtubule-induced PTK2/FAK1 dephosphorylation, an event important for focal adhesion disassembly, as well as integrin beta-1/ITGB1 cell surface expression. The protein is Zinc finger FYVE domain-containing protein 21 (Zfyve21) of Rattus norvegicus (Rat).